The chain runs to 538 residues: Casein kinase I homolog 1 (538 aa).

A disordered region spans residues 39-61 (SPARSSMTATTAANSNSNSSRDD). Over residues 41–57 (ARSSMTATTAANSNSNS) the composition is skewed to low complexity. Positions 69–353 (YKIGKKIGEG…ETADGQYDWM (285 aa)) constitute a Protein kinase domain. ATP contacts are provided by residues 75–83 (IGEGSFGVL) and Lys-98. Residue Asp-188 is the Proton acceptor of the active site. Disordered stretches follow at residues 366 to 428 (NKKP…KPKL) and 474 to 527 (QQQL…LAAS). Composition is skewed to low complexity over residues 391–410 (QLQM…QQQQ) and 474–498 (QQQL…QFGA). Residues Ser-522, Ser-523, and Ser-527 each carry the phosphoserine modification. S-palmitoyl cysteine attachment occurs at residues Cys-537 and Cys-538.

This sequence belongs to the protein kinase superfamily. CK1 Ser/Thr protein kinase family. Casein kinase I subfamily. In terms of processing, palmitoylated by AKR1.

Its subcellular location is the cell membrane. The protein localises to the mitochondrion membrane. It catalyses the reaction L-seryl-[protein] + ATP = O-phospho-L-seryl-[protein] + ADP + H(+). It carries out the reaction L-threonyl-[protein] + ATP = O-phospho-L-threonyl-[protein] + ADP + H(+). Casein kinases are operationally defined by their preferential utilization of acidic proteins such as caseins as substrates. This is Casein kinase I homolog 1 (YCK1) from Saccharomyces cerevisiae (strain ATCC 204508 / S288c) (Baker's yeast).